The following is a 353-amino-acid chain: 6-phosphogluconolactonase (353 aa).

Belongs to the cycloisomerase 2 family.

It localises to the cytoplasm. It catalyses the reaction 6-phospho-D-glucono-1,5-lactone + H2O = 6-phospho-D-gluconate + H(+). It participates in carbohydrate degradation; pentose phosphate pathway; D-ribulose 5-phosphate from D-glucose 6-phosphate (oxidative stage): step 2/3. Carboxylic ester hydrolase that may be involved in ulvan degradation. Ulvan is the main polysaccharide component of the Ulvales (green seaweed) cell wall. It is composed of disaccharide building blocks comprising 3-sulfated rhamnose (Rha3S) linked to D-glucuronic acid (GlcA), L-iduronic acid (IduA), or D-xylose (Xyl). Catalyzes the hydrolysis of 6-phosphogluconolactone to 6-phosphogluconate. The sequence is that of 6-phosphogluconolactonase (pgl) from Formosa agariphila (strain DSM 15362 / KCTC 12365 / LMG 23005 / KMM 3901 / M-2Alg 35-1).